A 706-amino-acid polypeptide reads, in one-letter code: Probable cyclic nucleotide-gated ion channel 3 (706 aa).

Residues 1–85 (MMNPQRNKFV…NDSYLQSWNK (85 aa)) lie on the Cytoplasmic side of the membrane. Residues 86–106 (IFLLLSVVALAFDPLFFYIPY) traverse the membrane as a helical segment. At 107 to 119 (VKPERFCLNLDKK) the chain is on the extracellular side. The helical transmembrane segment at 120–140 (LQTIACVFRTFIDAFYVVHML) threads the bilayer. The Cytoplasmic segment spans residues 141–174 (FQFHTGFITPSSSGFGRGELNEKHKDIALRYLGS). The chain crosses the membrane as a helical span at residues 175 to 195 (YFLIDLLSILPIPQVVVLAIV). Topologically, residues 196-208 (PRMRRPASLVAKE) are extracellular. The helical transmembrane segment at 209 to 229 (LLKWVIFCQYVPRIARIYPLF) threads the bilayer. At 230–247 (KEVTRTSGLVTETAWAGA) the chain is on the cytoplasmic side. A helical transmembrane segment spans residues 248 to 268 (ALNLFLYMLASHVFGSFWYLI). Over 269-371 (SIERKDRCWR…QNLKTSAFEG (103 aa)) the chain is Extracellular. A helical membrane pass occupies residues 372–392 (EIIFAIVICISGLVLFALLIG). Residues 393–706 (NMQKYLQSTT…ADPEFPMDET (314 aa)) lie on the Cytoplasmic side of the membrane. A nucleoside 3',5'-cyclic phosphate is bound by residues 477–600 (WFQA…KQLR) and aspartate 548. A calmodulin-binding region spans residues 591–606 (YRRLHSKQLRHMFRFY). One can recognise an IQ domain in the interval 611-640 (QTWAACFIQAAWKRHCRRKLSKALREEEGK).

It belongs to the cyclic nucleotide-gated cation channel (TC 1.A.1.5) family. As to quaternary structure, homotetramer or heterotetramer.

Its subcellular location is the cell membrane. Probable cyclic nucleotide-gated ion channel. The sequence is that of Probable cyclic nucleotide-gated ion channel 3 (CNGC3) from Arabidopsis thaliana (Mouse-ear cress).